The following is a 503-amino-acid chain: tRNA-2-methylthio-N(6)-dimethylallyladenosine synthase (503 aa).

Residues 5–121 enclose the MTTase N-terminal domain; that stretch reads RSYEIRTFGC…LPVLLERARH (117 aa). The [4Fe-4S] cluster site is built by Cys-14, Cys-50, Cys-84, Cys-158, Cys-162, and Cys-165. The 237-residue stretch at 144-380 folds into the Radical SAM core domain; the sequence is RESAYAGWVS…IALQEEISLA (237 aa). In terms of domain architecture, TRAM spans 383–453; the sequence is RELIGTEVEL…PHHLIADAPV (71 aa).

The protein belongs to the methylthiotransferase family. MiaB subfamily. In terms of assembly, monomer. [4Fe-4S] cluster serves as cofactor.

It localises to the cytoplasm. The catalysed reaction is N(6)-dimethylallyladenosine(37) in tRNA + (sulfur carrier)-SH + AH2 + 2 S-adenosyl-L-methionine = 2-methylsulfanyl-N(6)-dimethylallyladenosine(37) in tRNA + (sulfur carrier)-H + 5'-deoxyadenosine + L-methionine + A + S-adenosyl-L-homocysteine + 2 H(+). Functionally, catalyzes the methylthiolation of N6-(dimethylallyl)adenosine (i(6)A), leading to the formation of 2-methylthio-N6-(dimethylallyl)adenosine (ms(2)i(6)A) at position 37 in tRNAs that read codons beginning with uridine. The sequence is that of tRNA-2-methylthio-N(6)-dimethylallyladenosine synthase from Nocardia farcinica (strain IFM 10152).